Reading from the N-terminus, the 337-residue chain is UDP-3-O-acylglucosamine N-acyltransferase 1 (337 aa).

The active-site Proton acceptor is the His-238.

The protein belongs to the transferase hexapeptide repeat family. LpxD subfamily. As to quaternary structure, homotrimer.

It catalyses the reaction a UDP-3-O-[(3R)-3-hydroxyacyl]-alpha-D-glucosamine + a (3R)-hydroxyacyl-[ACP] = a UDP-2-N,3-O-bis[(3R)-3-hydroxyacyl]-alpha-D-glucosamine + holo-[ACP] + H(+). The protein operates within bacterial outer membrane biogenesis; LPS lipid A biosynthesis. Its function is as follows. Catalyzes the N-acylation of UDP-3-O-acylglucosamine using 3-hydroxyacyl-ACP as the acyl donor. Is involved in the biosynthesis of lipid A, a phosphorylated glycolipid that anchors the lipopolysaccharide to the outer membrane of the cell. The chain is UDP-3-O-acylglucosamine N-acyltransferase 1 from Koribacter versatilis (strain Ellin345).